The following is a 298-amino-acid chain: UPF0282 protein Kcr_0286 (298 aa).

This sequence belongs to the UPF0282 family.

The sequence is that of UPF0282 protein Kcr_0286 from Korarchaeum cryptofilum (strain OPF8).